Consider the following 550-residue polypeptide: Hydroxylamine reductase (550 aa).

Residues C3, C6, C18, and C25 each coordinate [2Fe-2S] cluster. Hybrid [4Fe-2O-2S] cluster is bound by residues H249, E273, C317, C405, C433, C458, E492, and K494. C405 is subject to Cysteine persulfide.

The protein belongs to the HCP family. Requires [2Fe-2S] cluster as cofactor. Hybrid [4Fe-2O-2S] cluster serves as cofactor.

It is found in the cytoplasm. It catalyses the reaction A + NH4(+) + H2O = hydroxylamine + AH2 + H(+). Its activity is regulated as follows. Inhibited by oxygen. Activated by cyanide except in the prolonged presence of excess cyanide, where the enzyme is inactivated. Catalyzes the reduction of hydroxylamine to form NH(3) and H(2)O. Is also able to reduce hydroxylamine analogs such as methylhydroxylamine and hydroxyquinone. Might have a role as a scavenger of potentially toxic by-products of nitrate metabolism. This chain is Hydroxylamine reductase, found in Escherichia coli (strain K12).